A 753-amino-acid chain; its full sequence is 5-methyltetrahydropteroyltriglutamate--homocysteine methyltransferase (753 aa).

Residues 19 to 22 (RELK) and arginine 113 contribute to the 5-methyltetrahydropteroyltri-L-glutamate site. L-homocysteine contacts are provided by residues 430-432 (IGS) and glutamate 483. L-methionine contacts are provided by residues 430–432 (IGS) and glutamate 483. 5-methyltetrahydropteroyltri-L-glutamate contacts are provided by residues 514–515 (RC) and tryptophan 560. Residue aspartate 598 coordinates L-homocysteine. Residue aspartate 598 participates in L-methionine binding. Glutamate 604 is a 5-methyltetrahydropteroyltri-L-glutamate binding site. Residues histidine 640, cysteine 642, and glutamate 664 each coordinate Zn(2+). The active-site Proton donor is histidine 693. Zn(2+) is bound at residue cysteine 725.

The protein belongs to the vitamin-B12 independent methionine synthase family. The cofactor is Zn(2+).

It carries out the reaction 5-methyltetrahydropteroyltri-L-glutamate + L-homocysteine = tetrahydropteroyltri-L-glutamate + L-methionine. It functions in the pathway amino-acid biosynthesis; L-methionine biosynthesis via de novo pathway; L-methionine from L-homocysteine (MetE route): step 1/1. Its function is as follows. Catalyzes the transfer of a methyl group from 5-methyltetrahydrofolate to homocysteine resulting in methionine formation. The chain is 5-methyltetrahydropteroyltriglutamate--homocysteine methyltransferase from Rhodococcus jostii (strain RHA1).